The primary structure comprises 753 residues: MVGSLEVSKPPEHKVESKIVIADEEEEDENDSPIEEVRLTVPITDDPSLPVLTFRTWFLGMVSCVVLAFVNNFFGYRSNPLTVSSVVAQIITLPLGKLMATTLPTTKLRLPGTNWSCSLNPGPFNMKEHVLITIFANTGAGGAYATSILTIVKAFYHRNLNPAAAMLLVQTTQLLGYGWAGMFRKYLVDSPYMWWPANLVQVSLFRALHEKEEKREGKQTKLRFFLIVFFLSFTYYIVPGYLFPSISYLSFVCWIWTRSVTAQQIGSGLHGLGIGSFGLDWSTVAGFLGSPLAVPFFAIANSFGGFIIFFYIILPIFYWSNAYEAKKFPFYTSHPFDHTGQRYNTTRILNQKTFNIDLPAYESYSKLYLSILFALIYGLSFGTLTATISHVALFDGKFIWELWKKATLTTKDKFGDVHTRLMKKNYKEVPQWWFVAVLAASFVLALYACEGFGKQLQLPWWGLLLACAIAFTFTLPIGVILATTNQRMGLNVISELIIGFLYPGKPLANVAFKTYGSVSIAQALYFVGDFKLGHYMKIPPRSMFIVQLVATIVASTVSFGTTWWLLSSVENICNTDMLPKSSPWTCPGDVVFYNASIIWGIIGPGRMFTSKGIYPGMNWFFLIGFLAPVPVWFFARKFPEKKWIHQIHIPLIFSGANVMPMAKAVHYWSWFAVGIVFNYYIFRRYKGWWARHNYILSAALDAGTAVMGVLIYFALQNNNISLPDWWGNENTDHCPLANCPTEKGIVAKGCPVF.

Helical transmembrane passes span 56–76 (TWFLGMVSCVVLAFVNNFFGY), 80–100 (PLTVSSVVAQIITLPLGKLMA), 132–152 (ITIFANTGAGGAYATSILTIV), 163–183 (AAAMLLVQTTQLLGYGWAGMF), 224–244 (FFLIVFFLSFTYYIVPGYLFP), 296–316 (FFAIANSFGGFIIFFYIILPI), 368–388 (YLSILFALIYGLSFGTLTATI), 432–452 (WWFVAVLAASFVLALYACEGF), 461–481 (WGLLLACAIAFTFTLPIGVIL), 506–528 (PLANVAFKTYGSVSIAQALYFVG), 544–564 (FIVQLVATIVASTVSFGTTWW), 583–603 (PWTCPGDVVFYNASIIWGIIG), 615–635 (PGMNWFFLIGFLAPVPVWFFA), 662–682 (AKAVHYWSWFAVGIVFNYYIF), and 695–715 (ILSAALDAGTAVMGVLIYFAL).

It belongs to the oligopeptide OPT transporter (TC 2.A.67.1) family. In terms of tissue distribution, expressed predominantly in flowers, and at a very low level in leaves and roots.

The protein resides in the membrane. Its function is as follows. Involved in the translocation of tetra- and pentapeptides across the cellular membrane in an energy-dependent manner. The sequence is that of Oligopeptide transporter 5 (OPT5) from Arabidopsis thaliana (Mouse-ear cress).